The chain runs to 248 residues: Lysine-rich arabinogalactan protein 19 (248 aa).

An N-terminal signal peptide occupies residues Met1–Ala24. Residues Gln25–Thr37 are compositionally biased toward low complexity. Residues Gln25–Asn221 are disordered. 3 stretches are compositionally biased toward pro residues: residues Ala38–Thr57, Pro67–Lys86, and Ala94–Ala171. Over residues Thr173–Ala187 the composition is skewed to basic residues. Residues Ala189–Leu203 show a composition bias toward pro residues. A lipid anchor (GPI-anchor amidated serine) is attached at Ser196. A propeptide spans Pro197–Ala248 (removed in mature form).

The protein belongs to the lysine-rich AGP family. In terms of processing, O-glycosylated on the hydroxyproline residues. In terms of tissue distribution, strongly expressed in stems, moderately expressed in flowers and roots and weakly expressed in young leaves.

The protein localises to the cell membrane. Functionally, proteoglycan that seems to be implicated in diverse developmental roles such as differentiation, cell-cell recognition, embryogenesis and programmed cell death. The protein is Lysine-rich arabinogalactan protein 19 (AGP19) of Arabidopsis thaliana (Mouse-ear cress).